The sequence spans 402 residues: MLKPQTPRARRAAHPNSHMASSSSSSSLCRLLIPRPTTRRFSGGGGEGGMAAAAPVKREVKPEAGEGWGGGDLGVVPPPPRPMEGLGEAGPAPFVAKTYEMVADAATDAVVSWGPGGSGASFVVWDPHALAAGVLPRFFKHANFSSFVRQLNTYGFRKVTPDRWEFANEAFLAGQKHLLKNIKRRRVSKPLVDSQLRNKASVVFGQPEAPGEVVSLKRDRAALRAEVIMLKQQYNACKSQLIAMEEMVRNIERRQQQTIGFFAKVLTNPAFVQQVLLNYVNKNGLRGAAKRQRLMENEEQHADSPLNKGMEAASVMEADVSPGSTGCGTVGKVETTPMCNFQNIENMCDDVWEELDALPETGMEQEEKAGIGSFDVEEFVGRPCGWVDDCPYLVEPMQFVEH.

A disordered region spans residues 1 to 28; it reads MLKPQTPRARRAAHPNSHMASSSSSSSL. A coiled-coil region spans residues 212–258; that stretch reads EVVSLKRDRAALRAEVIMLKQQYNACKSQLIAMEEMVRNIERRQQQT. The interval 216–266 is hydrophobic repeat HR-A/B; the sequence is LKRDRAALRAEVIMLKQQYNACKSQLIAMEEMVRNIERRQQQTIGFFAKVL. The short motif at 290-293 is the Nuclear localization signal element; it reads KRQR. The AHA motif lies at 349–358; that stretch reads DDVWEELDAL.

Belongs to the HSF family. Class A subfamily. In terms of assembly, homotrimer. Exhibits temperature-dependent phosphorylation.

The protein localises to the nucleus. Its function is as follows. Transcriptional regulator that specifically binds DNA of heat shock promoter elements (HSE). This is Heat stress transcription factor A-6a (HSFA6B) from Oryza sativa subsp. japonica (Rice).